Here is a 251-residue protein sequence, read N- to C-terminus: MSSVTMKELLEAGVHFGHQTKRWNPKMKPYIFGARNGIYIIDLQKTVRLFKNAYSFVRECAQSGETILFVGTKKQAQDAIGEEASRCNMYYVNQRWLGGMLTNFATVKQSIDRLKRLDAMFADGTVEAYTKKEALQLEKERQKLEKTLGGIKGMGKVPGALFVIDPKNETIAINEAKKLGIPVVAVVDTNCDPDPIDYVIPGNDDAIRAIRLLTSKMADAVLEGAQARDAQLQTGEEEMAAAEGESEQVEA.

The disordered stretch occupies residues 232–251 (LQTGEEEMAAAEGESEQVEA). Positions 235–251 (GEEEMAAAEGESEQVEA) are enriched in acidic residues.

This sequence belongs to the universal ribosomal protein uS2 family.

This is Small ribosomal subunit protein uS2 from Geobacter metallireducens (strain ATCC 53774 / DSM 7210 / GS-15).